Reading from the N-terminus, the 391-residue chain is Leucine aminopeptidase 1 (391 aa).

The N-terminal stretch at 1-19 (MKLSIALALGATASTGVLA) is a signal peptide. Residues 20–91 (AVVPQQEPLI…YPTLHAGSYV (72 aa)) constitute a propeptide that is removed on maturation. Asparagine 183 is a glycosylation site (N-linked (GlcNAc...) asparagine). Residues histidine 191 and aspartate 210 each coordinate Zn(2+). Residue asparagine 235 is glycosylated (N-linked (GlcNAc...) asparagine). Positions 249 and 276 each coordinate Zn(2+). Cysteine 325 and cysteine 329 are joined by a disulfide. A Zn(2+)-binding site is contributed by histidine 358.

This sequence belongs to the peptidase M28 family. M28E subfamily. As to quaternary structure, monomer. It depends on Zn(2+) as a cofactor.

The protein localises to the secreted. Functionally, extracellular aminopeptidase that allows assimilation of proteinaceous substrates. This is Leucine aminopeptidase 1 (lap1) from Aspergillus niger (strain ATCC MYA-4892 / CBS 513.88 / FGSC A1513).